We begin with the raw amino-acid sequence, 808 residues long: Sucrose synthase 2 (808 aa).

Ser-10 is modified (phosphoserine; by CPK). Residues 272-749 (MMFNVVILSP…GLQRIYEKYT (478 aa)) form a GT-B glycosyltransferase region.

It belongs to the glycosyltransferase 1 family. Plant sucrose synthase subfamily. Homotetramer or heterotetramer with SUS1. Phosphorylated at Ser-10 by CPK23 in developing seeds. Predominantly expressed in the leaf tissues. Expressed in seeds, and at lower levels in roots. Expressed in leaf mesophyll and phloem (at protein level).

It carries out the reaction an NDP-alpha-D-glucose + D-fructose = a ribonucleoside 5'-diphosphate + sucrose + H(+). With respect to regulation, activated by phosphorylation at Ser-10 by CPK23. Its function is as follows. Sucrose-cleaving enzyme that provides UDP-glucose and fructose for various metabolic pathways. Functions in developing seeds by supplying substrates for the biosynthesis of storage products. This chain is Sucrose synthase 2 (SUS2), found in Oryza sativa subsp. japonica (Rice).